A 167-amino-acid polypeptide reads, in one-letter code: Small ribosomal subunit protein uS5 (167 aa).

The 64-residue stretch at 11–74 (LQEKLIAVNR…EKARRNMINV (64 aa)) folds into the S5 DRBM domain.

Belongs to the universal ribosomal protein uS5 family. As to quaternary structure, part of the 30S ribosomal subunit. Contacts proteins S4 and S8.

Functionally, with S4 and S12 plays an important role in translational accuracy. In terms of biological role, located at the back of the 30S subunit body where it stabilizes the conformation of the head with respect to the body. The chain is Small ribosomal subunit protein uS5 from Klebsiella pneumoniae subsp. pneumoniae (strain ATCC 700721 / MGH 78578).